The following is a 416-amino-acid chain: Muscle-specific homeobox protein tinman (416 aa).

2 stretches are compositionally biased toward polar residues: residues 1 to 11 (MLQHHQQQAQS) and 18 to 33 (YTQS…ADAL). Disordered regions lie at residues 1–33 (MLQH…ADAL), 246–305 (TASN…RKPR), and 391–416 (VMWP…MQHM). The segment covering 281-295 (NSISGNSNPGSNSGS) has biased composition (low complexity). The homeobox DNA-binding region spans 301–360 (KRKPRVLFSQAQVLELECRFRLKKYLTGAEREIIAQKLNLSATQVKIWFQNRRYKSKRGD). The span at 397 to 416 (MQQSQQQQQHHAQQQQMQHM) shows a compositional bias: low complexity.

The protein localises to the nucleus. Required for the development of heart and visceral muscle; for the formation of somatic muscles. Has a crucial function in the early mesodermal subdivisions. This chain is Muscle-specific homeobox protein tinman (tin), found in Drosophila melanogaster (Fruit fly).